Consider the following 632-residue polypeptide: Chaperone protein HtpG (632 aa).

The interval 1–339 is a; substrate-binding; sequence MAHETMSFQA…SADLPLNVSR (339 aa). The tract at residues 340–559 is b; that stretch reads EILQESRDVK…DNDMSGYLQR (220 aa). The tract at residues 560–632 is c; the sequence is MLKAAGQNAP…TNALLLSRAA (73 aa).

The protein belongs to the heat shock protein 90 family. In terms of assembly, homodimer.

The protein resides in the cytoplasm. In terms of biological role, molecular chaperone. Has ATPase activity. This chain is Chaperone protein HtpG, found in Burkholderia ambifaria (strain ATCC BAA-244 / DSM 16087 / CCUG 44356 / LMG 19182 / AMMD) (Burkholderia cepacia (strain AMMD)).